Reading from the N-terminus, the 508-residue chain is Catalase (508 aa).

An N-terminal signal peptide occupies residues 1–21 (MHMSKSFLLISMGLASISVHA). Catalysis depends on residues H72 and N145. Y353 contacts heme. Residues 373–392 (PKSPVANHNQDGPSNNSTGL) show a composition bias toward polar residues. A disordered region spans residues 373–396 (PKSPVANHNQDGPSNNSTGLGNVD).

It belongs to the catalase family. Requires heme as cofactor.

The protein resides in the periplasm. The catalysed reaction is 2 H2O2 = O2 + 2 H2O. Functionally, decomposes hydrogen peroxide into water and oxygen; serves to protect cells from the toxic effects of hydrogen peroxide. The chain is Catalase from Vibrio vulnificus (strain YJ016).